The following is an 85-amino-acid chain: Phosphocarrier protein HPr (85 aa).

One can recognise an HPr domain in the interval 1 to 85; that stretch reads MFQNQVKITA…HLSLIMTELE (85 aa). Catalysis depends on His-15, which acts as the Pros-phosphohistidine intermediate.

Belongs to the HPr family.

Its subcellular location is the cytoplasm. Its function is as follows. General (non sugar-specific) component of the phosphoenolpyruvate-dependent sugar phosphotransferase system (sugar PTS). This major carbohydrate active-transport system catalyzes the phosphorylation of incoming sugar substrates concomitantly with their translocation across the cell membrane. The phosphoryl group from phosphoenolpyruvate (PEP) is transferred to the phosphoryl carrier protein HPr by enzyme I. Phospho-HPr then transfers it to the PTS EIIA domain. In Buchnera aphidicola subsp. Acyrthosiphon pisum (strain APS) (Acyrthosiphon pisum symbiotic bacterium), this protein is Phosphocarrier protein HPr (ptsH).